A 65-amino-acid polypeptide reads, in one-letter code: MPKMKTKKSAAKRFQVRGSGSIKRGQAFKRHILTKKTTKNKRQLRGSAAVHETNIASVKAMMPFA.

The segment covering 1–15 (MPKMKTKKSAAKRFQ) has biased composition (basic residues). The disordered stretch occupies residues 1–26 (MPKMKTKKSAAKRFQVRGSGSIKRGQ).

This sequence belongs to the bacterial ribosomal protein bL35 family.

The chain is Large ribosomal subunit protein bL35 from Bordetella avium (strain 197N).